Here is a 183-residue protein sequence, read N- to C-terminus: MKLSFDSIVTKEPIRLAIIMENVIFDTRDEYGELHSESTMRKKYHEDLKPIPGAIEAFKNLNSITDLRNRKIFDVNIISTLSLTNQKSYINKIANVQKWFGDEALKKLIFCQDKSSIRTDILIDNSFKPQNFPDTNKFTLNTPYLQIRYGTDETNFYQIKSWTDNDYLDVIKKICIDLGLLVI.

This is an uncharacterized protein from Acanthamoeba polyphaga (Amoeba).